Consider the following 324-residue polypeptide: Putative F-box/kelch-repeat protein At5g28160 (324 aa).

Positions 7-54 (RPSFLSLPDEIILSCLARISRSYYPKLSLVCKTFRTLLISNELIVARL) constitute an F-box domain. The stretch at 170–216 (KIYVMGGCMADESVNWGEVFDIKTQTWEALPDPGPEFRFSSIRKIDV) is one Kelch repeat.

The sequence is that of Putative F-box/kelch-repeat protein At5g28160 from Arabidopsis thaliana (Mouse-ear cress).